The sequence spans 318 residues: Rhomboid-related protein 4 (318 aa).

Over 1–21 the chain is Cytoplasmic; that stretch reads MQRRSRGINTGLILLLSQIFH. The helical transmembrane segment at 22–42 threads the bilayer; sequence VGINNIPPVTLATLALNIWFF. At 43-106 the chain is on the extracellular side; it reads LNPQKPLYSS…RRLGSRWFAY (64 aa). A helical transmembrane segment spans residues 107–127; the sequence is VITTFSVLTGVVYLLLQFAVA. The Cytoplasmic portion of the chain corresponds to 128–137; it reads EFMDEPDFKR. A helical membrane pass occupies residues 138–154; sequence SCAVGFSGVLFALKVLN. S144 (nucleophile) is an active-site residue. Over 155–179 the chain is Extracellular; sequence NHYCPGGFVNILGFPVPNRFACWVE. Residues 180–204 traverse the membrane as a helical segment; it reads LVAIHLFSPGTSFAGHQAGILVGLM. The active site involves H195. Over 205–318 the chain is Cytoplasmic; it reads YTQGPLKKIM…RQRLHRFDSQ (114 aa). A ubiquitin-binding domain (UBD) region spans residues 271–286; sequence SEEEQLERALQASLWD. Residues 285–318 form a disordered region; that stretch reads WDRGHTRNSPPPYGFHLSPEEEMRRQRLHRFDSQ. Residues 302–318 show a composition bias toward basic and acidic residues; that stretch reads SPEEEMRRQRLHRFDSQ. The segment at 303 to 318 is VCP/p97-interacting motif (VIM); it reads PEEEMRRQRLHRFDSQ.

It belongs to the peptidase S54 family. Interacts with BIK and STEAP3. Interacts (via C-terminal domain) with VCP. Interacts with ubiquitin and ubiquitinated proteins.

It is found in the endoplasmic reticulum membrane. It localises to the mitochondrion membrane. The enzyme catalyses Cleaves type-1 transmembrane domains using a catalytic dyad composed of serine and histidine that are contributed by different transmembrane domains.. Its activity is regulated as follows. Inhibited by aprotinin. In terms of biological role, intramembrane-cleaving serine protease that cleaves single transmembrane or multi-pass membrane proteins in the hydrophobic plane of the membrane, luminal loops and juxtamembrane regions. Involved in regulated intramembrane proteolysis and the subsequent release of functional polypeptides from their membrane anchors. Functional component of endoplasmic reticulum-associated degradation (ERAD) for misfolded membrane proteins. Required for the degradation process of some specific misfolded endoplasmic reticulum (ER) luminal proteins. Participates in the transfer of misfolded proteins from the ER to the cytosol, where they are destroyed by the proteasome in a ubiquitin-dependent manner. Functions in BIK, MPZ, PKD1, PTCRA, RHO, STEAP3 and TRAC processing. Involved in the regulation of exosomal secretion; inhibits the TSAP6-mediated secretion pathway. Involved in the regulation of apoptosis; modulates BIK-mediated apoptotic activity. Also plays a role in the regulation of spermatogenesis; inhibits apoptotic activity in spermatogonia. The protein is Rhomboid-related protein 4 (RHBDD1) of Pongo abelii (Sumatran orangutan).